A 438-amino-acid chain; its full sequence is MYYHHSHQGWSGDYPRQQSWGQPPPSSYPYPYSSNAQYQPPPGPPPTSHYAPPPGPPPSHYYPPPGSYPSPAPSPYYGQHHTPTPPPQSSSPHQRSYHNHSPSWGQNLPPRPPQESQHFGRGAPSNYRFQYSNCTGRRKALLIGINYIGQPNQLRGCINDVTNMSTFLNEKYGYRREDMVILTDDQKNPMSIPNKANILRAMQWLVKDAQPNDSLFIHFSGHGGRTPDLDGDEEDGYDDVIYPLDYRTAGHIVDDDMHAIMVRPLRPGVRLTAIFDSCHSGTALDLPYVYSTQGILKEPNLAKEAAMDLFSAINSYGKGDLSSVAQTAIGFFKKAANGDTARQRTVMTKTSPADVVMFSGSKDTQTSADTFQDGEARGALSWAFIKTLQQRPNQSYLQLLNSIRNELEGKYTQKPQLSCSHPLGMCNASLVPPRTEID.

Residues 1–125 (MYYHHSHQGW…SQHFGRGAPS (125 aa)) are disordered. The span at 29–38 (PYPYSSNAQY) shows a compositional bias: low complexity. Over residues 39 to 74 (QPPPGPPPTSHYAPPPGPPPSHYYPPPGSYPSPAPS) the composition is skewed to pro residues. Catalysis depends on residues His222 and Cys278.

Belongs to the peptidase C14B family.

In terms of biological role, involved in cell death (apoptosis). The protein is Metacaspase-1B (casB) of Aspergillus niger (strain ATCC MYA-4892 / CBS 513.88 / FGSC A1513).